The primary structure comprises 432 residues: Adenylosuccinate synthetase 2 (432 aa).

GTP-binding positions include 12 to 18 and 40 to 42; these read GDEGKGR and GHT. The active-site Proton acceptor is D13. D13 and G40 together coordinate Mg(2+). Residues 13 to 16, 38 to 41, T128, R142, Q222, T237, and R301 contribute to the IMP site; these read DEGK and NAGH. H41 functions as the Proton donor in the catalytic mechanism. Residue 297-303 participates in substrate binding; that stretch reads VNTGRPR. Residues R303, 329 to 331, and 411 to 413 each bind GTP; these read KLD and TTG.

It belongs to the adenylosuccinate synthetase family. Homodimer. Mg(2+) is required as a cofactor.

It localises to the cytoplasm. It carries out the reaction IMP + L-aspartate + GTP = N(6)-(1,2-dicarboxyethyl)-AMP + GDP + phosphate + 2 H(+). It participates in purine metabolism; AMP biosynthesis via de novo pathway; AMP from IMP: step 1/2. Plays an important role in the de novo pathway of purine nucleotide biosynthesis. Catalyzes the first committed step in the biosynthesis of AMP from IMP. In Burkholderia lata (strain ATCC 17760 / DSM 23089 / LMG 22485 / NCIMB 9086 / R18194 / 383), this protein is Adenylosuccinate synthetase 2.